A 521-amino-acid polypeptide reads, in one-letter code: FAD-dependent monooxygenase DEP2 (521 aa).

Residues 1–22 (MHDSPPFKVIIVGAGVTGLTLA) form the signal peptide. Asp36 and Arg109 together coordinate FAD. N-linked (GlcNAc...) asparagine glycosylation is found at Asn139 and Asn220. FAD is bound by residues Asp310 and Gly323. Residues 477-497 (ILVLWAGLWLAICFFHLVFSG) traverse the membrane as a helical segment. Residue Asn515 is glycosylated (N-linked (GlcNAc...) asparagine).

It belongs to the paxM FAD-dependent monooxygenase family. The cofactor is FAD.

It localises to the membrane. It functions in the pathway polyketide biosynthesis. Its function is as follows. Part of the gene cluster that mediates the biosynthesis of depudecin, a highly oxidized eleven-carbon linear polyketide that acts as a histone deacetylase (HDAC) inhibitor and makes a small contribution to pathogenesis. The reducing polyketide synthase DEP5 is the central enzyme in depudecin biosynthesis by yielding the backbone polyketide chain. The monooxygenases DEP2 and DEP4, as well as the uncharacterized protein DEP1, then act as tailoring enzymes to modify the intermediate polyketide chain into depudecin. This chain is FAD-dependent monooxygenase DEP2, found in Fusarium langsethiae.